Here is a 597-residue protein sequence, read N- to C-terminus: Elongation factor 4 (597 aa).

A tr-type G domain is found at S4 to K181. GTP-binding positions include D16–T21 and N128–D131.

Belongs to the TRAFAC class translation factor GTPase superfamily. Classic translation factor GTPase family. LepA subfamily.

It is found in the cell membrane. The catalysed reaction is GTP + H2O = GDP + phosphate + H(+). Required for accurate and efficient protein synthesis under certain stress conditions. May act as a fidelity factor of the translation reaction, by catalyzing a one-codon backward translocation of tRNAs on improperly translocated ribosomes. Back-translocation proceeds from a post-translocation (POST) complex to a pre-translocation (PRE) complex, thus giving elongation factor G a second chance to translocate the tRNAs correctly. Binds to ribosomes in a GTP-dependent manner. The sequence is that of Elongation factor 4 from Mycoplasmopsis agalactiae (strain NCTC 10123 / CIP 59.7 / PG2) (Mycoplasma agalactiae).